The sequence spans 83 residues: Exodeoxyribonuclease 7 small subunit (83 aa).

This sequence belongs to the XseB family. In terms of assembly, heterooligomer composed of large and small subunits.

It localises to the cytoplasm. It carries out the reaction Exonucleolytic cleavage in either 5'- to 3'- or 3'- to 5'-direction to yield nucleoside 5'-phosphates.. Bidirectionally degrades single-stranded DNA into large acid-insoluble oligonucleotides, which are then degraded further into small acid-soluble oligonucleotides. In Allorhizobium ampelinum (strain ATCC BAA-846 / DSM 112012 / S4) (Agrobacterium vitis (strain S4)), this protein is Exodeoxyribonuclease 7 small subunit.